The sequence spans 186 residues: Quinone reductase (186 aa).

Residues 13-20 (SLRKESYN), 80-83 (EYNR), and S116 each bind FMN.

This sequence belongs to the SsuE family. Homotetramer. Dimer of dimers. The tetrameric configuration has a central role in chromate reductase activity. FMN is required as a cofactor.

The catalysed reaction is a quinone + NADH + H(+) = a quinol + NAD(+). The enzyme catalyses a quinone + NADPH + H(+) = a quinol + NADP(+). It catalyses the reaction Cr(6+) + 2 NADH + O2 = Cr(3+) + superoxide + 2 NAD(+) + 2 H(+). It carries out the reaction Cr(6+) + 2 NADPH + O2 = Cr(3+) + superoxide + 2 NADP(+) + 2 H(+). Its activity is regulated as follows. May be inhibited by divalent cations. Catalyzes the reduction of quinones. Acts by simultaneous two-electron transfer, avoiding formation of highly reactive semiquinone intermediates and producing quinols that promote tolerance of H(2)O(2). Quinone reduction is probably the primary biological role of ChrR. Can also reduce toxic chromate to insoluble and less toxic Cr(3+). Catalyzes the transfer of three electrons to Cr(6+) producing Cr(3+) and one electron to molecular oxygen. This reaction produces transiently a minimal amount of the toxic Cr(5+) species and reactive oxygen species (ROS). Chromate reduction protects the cell against chromate toxicity, but is likely a secondary activity. Can also reduce potassium ferricyanide and 2,6-dichloroindophenol. During chromate reduction, displays an eightfold preference for NADH over NADPH. This is Quinone reductase from Pseudomonas putida (strain ATCC 47054 / DSM 6125 / CFBP 8728 / NCIMB 11950 / KT2440).